The primary structure comprises 540 residues: FAD-binding monooxygenase lolF2 (540 aa).

FAD contacts are provided by residues 43-46 (VWRE) and 55-58 (DSLF). NADP(+)-binding positions include 53 to 55 (AVD), 182 to 188 (TGPSGVQ), and 205 to 206 (QS).

The protein belongs to the FAD-binding monooxygenase family. FAD is required as a cofactor.

It participates in alkaloid biosynthesis. Functionally, FAD-binding monooxygenase; part of the gene cluster that mediates the biosynthesis of loline alkaloids, potent insecticidal agents composed of a pyrrolizidine ring system and an uncommon ether bridge linking carbons 2 and 7. Lolines are structurally differentiated by the various modifications of the L-amino group and include norloline, loline, N-methylloline, N-acetylloline, N-acetylnorloline, and N-formylloline. The first committed step is the condensation of O-acetyl-L-homoserine (derived from L-aspartic acid) and L-proline, probably catalyzed by the gamma-type pyridoxal 5'-phosphate(PLP)-dependent enzyme lolC, to give the diamino diacid, NACPP. Ensuing cyclization, decarboxylation, and acetylation steps yield 1-exo-acetamidopyrrolizidine (AcAP). LolO is required for installation of the ether bridge upon the pathway intermediate, 1-exo-acetamidopyrrolizidine (AcAP). In sequential 2-oxoglutarate- and O(2)-consuming steps, lolO removes hydrogens from C2 and C7 of AcAP to form both carbon-oxygen bonds in N-acetylnorloline (NANL), the precursor to all other lolines. The enzymes lolD, lolE, lolF and lolT have also been proposed to be involved in the ether-bridge installation. Further processing of the exocyclic moiety of NANL by fungal N-acetamidase (LolN), methyltransferase (LolM), and cytochrome P450 (LolP) enzymes, with occasional involvement of a plant acetyltransferase, generates the other known lolines. LolN transforms NANL to norlonine which is monomethylated and dimethylated to respectively lonine and N-methyllonine (NML) by lolM. LolP catalyzes hydroxylation of the methyl group in N-methylloline (NML) and further oxygenation to N-formylloline (NFL). A plant acetyltransferase is responsible for the acetylation of loline to form N-acetylloline (NAL). LolA might interact with aspartate kinase to prevent feedback inhibition of its activity by these end products and thereby promote production of l-homoserine from l-aspartate. The protein is FAD-binding monooxygenase lolF2 of Epichloe uncinata (Endophyte fungus).